Reading from the N-terminus, the 195-residue chain is Large ribosomal subunit protein eL6 (195 aa).

2 positions are modified to phosphoserine: Ser105 and Ser115.

It belongs to the eukaryotic ribosomal protein eL6 family. Component of the large ribosomal subunit (LSU). Mature yeast ribosomes consist of a small (40S) and a large (60S) subunit. The 40S small subunit contains 1 molecule of ribosomal RNA (18S rRNA) and at least 33 different proteins. The large 60S subunit contains 3 rRNA molecules (25S, 5.8S and 5S rRNA) and at least 46 different proteins.

The protein localises to the cytoplasm. It is found in the nucleus. The protein resides in the nucleolus. Component of the ribosome, a large ribonucleoprotein complex responsible for the synthesis of proteins in the cell. The small ribosomal subunit (SSU) binds messenger RNAs (mRNAs) and translates the encoded message by selecting cognate aminoacyl-transfer RNA (tRNA) molecules. The large subunit (LSU) contains the ribosomal catalytic site termed the peptidyl transferase center (PTC), which catalyzes the formation of peptide bonds, thereby polymerizing the amino acids delivered by tRNAs into a polypeptide chain. The nascent polypeptides leave the ribosome through a tunnel in the LSU and interact with protein factors that function in enzymatic processing, targeting, and the membrane insertion of nascent chains at the exit of the ribosomal tunnel. The protein is Large ribosomal subunit protein eL6 (rpl6) of Schizosaccharomyces pombe (strain 972 / ATCC 24843) (Fission yeast).